We begin with the raw amino-acid sequence, 138 residues long: ATP synthase epsilon chain (138 aa).

The protein belongs to the ATPase epsilon chain family. As to quaternary structure, F-type ATPases have 2 components, CF(1) - the catalytic core - and CF(0) - the membrane proton channel. CF(1) has five subunits: alpha(3), beta(3), gamma(1), delta(1), epsilon(1). CF(0) has three main subunits: a, b and c.

Its subcellular location is the cellular thylakoid membrane. In terms of biological role, produces ATP from ADP in the presence of a proton gradient across the membrane. The sequence is that of ATP synthase epsilon chain (atpC) from Synechococcus sp. (strain PCC 6716).